The sequence spans 222 residues: RING finger protein 141 (222 aa).

The segment at 147-184 (CCICMDGKADLILPCAHSFCQKCIDKWSGQSRNCPVCR) adopts an RING-type zinc-finger fold.

This Danio rerio (Zebrafish) protein is RING finger protein 141 (rnf141).